Consider the following 575-residue polypeptide: MASWLRRKLRGKRRPVIAFCLLMILSAMAVTRFPPQRPSAGPDPGPMEPQGVTGAPATHIRQALSSSRRQRARNMGFWRSRALPRNSILVCAEEQGHRARVDRSRESPGGDLRHPGRVRRDITLSGHPRLSTQHVVLLREDEVGDPGTKDLGHPQHGSPIQETQSEVVTLVSPLPGSDMAALPAWRATSGLTLWPHTAEGRDLLGAENRALTGGQQAEDPTLASGAHQWPGSVEKLQGSVWCDAETLLSSSRTGGQAPPWLTDHDVQMLRLLAQGEVVDKARVPAHGQVLQVGFSTEAALQDLSSPRLSQLCSQGLCGLIKRPGDLPEVLSFHVDRVLGLRRSLPAVARRFHSPLLPYRYTDGGARPVIWWAPDVQHLSDPDEDQNSLALGWLQYQALLAHSCNWPGQAPCPGIHHTEWARLALFDFLLQVHDRLDRYCCGFEPEPSDPCVEERLREKCQNPAELRLVHILVRSSDPSHLVYIDNAGNLQHPEDKLNFRLLEGIDGFPESAVKVLASGCLQNMLLKSLQMDPVFWESQGGAQGLKQVLQTLEQRGQVLLGHIQKHNLTLFRDEDP.

Positions 1-29 are cleaved as a signal peptide; that stretch reads MASWLRRKLRGKRRPVIAFCLLMILSAMA. The propeptide at 30–119 is removed in mature form; that stretch reads VTRFPPQRPS…GDLRHPGRVR (90 aa). The tract at residues 53-58 is O-glycosylated at one site; it reads TGAPAT. Residues 143 to 153 show a composition bias toward basic and acidic residues; sequence VGDPGTKDLGH. The disordered stretch occupies residues 143 to 162; the sequence is VGDPGTKDLGHPQHGSPIQE. A propeptide spans 437-575 (removed in mature form); that stretch reads RYCCGFEPEP…NLTLFRDEDP (139 aa). The N-linked (GlcNAc...) asparagine glycan is linked to asparagine 566.

The protein belongs to the GASK family. Post-translationally, O-glycosylated with core 1 or possibly core 8 glycans. Proteolytically cleaved. Cleaved at Arg-120 and Arg-437 leading to a processed mature product of 35 kDa. The cleavage takes place in the Golgi apparatus. In terms of tissue distribution, expressed in skin, lung and colon (at protein level).

The protein resides in the secreted. Its subcellular location is the endoplasmic reticulum. It is found in the golgi apparatus. The protein localises to the membrane. It localises to the caveola. This is Golgi-associated kinase 1A from Homo sapiens (Human).